A 315-amino-acid polypeptide reads, in one-letter code: MGLTEGVFLILSGTQFTLGILVNCFIELVNGSSWFKTKRMSLSDFIITTLALLRIILLCIILTDSFLIEFSPNTHDSGIIMQIIDVSWTFTNHLSIWLATCLGVLYCLKIASFSHPTFLWLKWRVSRVMVWMLLGALLLSCGSTASLINEFKLYSVFRGIEATRNVTEHFRKKRSEYYLIHVLGTLWYLPPLIVSLASYSLLIFSLGRHTRQMLQNGTSSRDPTTEAHKRAIRIILSFFFLFLLYFLAFLIASFGNFLPKTKMAKMIGEVMTMFYPAGHSFILILGNSKLKQTFVVMLRCESGHLKPGSKGPIFS.

At 1 to 5 the chain is on the extracellular side; sequence MGLTE. Residues 6–26 form a helical membrane-spanning segment; the sequence is GVFLILSGTQFTLGILVNCFI. At 27-41 the chain is on the cytoplasmic side; the sequence is ELVNGSSWFKTKRMS. A helical membrane pass occupies residues 42 to 62; that stretch reads LSDFIITTLALLRIILLCIIL. Over 63–93 the chain is Extracellular; the sequence is TDSFLIEFSPNTHDSGIIMQIIDVSWTFTNH. The chain crosses the membrane as a helical span at residues 94–114; sequence LSIWLATCLGVLYCLKIASFS. The Cytoplasmic portion of the chain corresponds to 115-127; sequence HPTFLWLKWRVSR. A helical membrane pass occupies residues 128–148; the sequence is VMVWMLLGALLLSCGSTASLI. The Extracellular segment spans residues 149–185; sequence NEFKLYSVFRGIEATRNVTEHFRKKRSEYYLIHVLGT. N165 carries N-linked (GlcNAc...) asparagine glycosylation. A helical membrane pass occupies residues 186 to 206; sequence LWYLPPLIVSLASYSLLIFSL. At 207–233 the chain is on the cytoplasmic side; sequence GRHTRQMLQNGTSSRDPTTEAHKRAIR. A helical transmembrane segment spans residues 234–254; it reads IILSFFFLFLLYFLAFLIASF. The Extracellular segment spans residues 255–265; it reads GNFLPKTKMAK. Residues 266–286 traverse the membrane as a helical segment; it reads MIGEVMTMFYPAGHSFILILG. Residues 287–315 are Cytoplasmic-facing; sequence NSKLKQTFVVMLRCESGHLKPGSKGPIFS.

Belongs to the G-protein coupled receptor T2R family.

It is found in the membrane. Gustducin-coupled receptor implicated in the perception of bitter compounds in the oral cavity and the gastrointestinal tract. Signals through PLCB2 and the calcium-regulated cation channel TRPM5. The chain is Taste receptor type 2 member 3 (TAS2R3) from Gorilla gorilla gorilla (Western lowland gorilla).